An 809-amino-acid polypeptide reads, in one-letter code: Sucrose synthase 2 (809 aa).

Residues 278-756 (MVFNVVILSP…GLQRIYERYT (479 aa)) form a GT-B glycosyltransferase region.

This sequence belongs to the glycosyltransferase 1 family. Plant sucrose synthase subfamily.

The catalysed reaction is an NDP-alpha-D-glucose + D-fructose = a ribonucleoside 5'-diphosphate + sucrose + H(+). Functionally, sucrose-cleaving enzyme that provides UDP-glucose and fructose for various metabolic pathways. The protein is Sucrose synthase 2 (SUS2) of Pisum sativum (Garden pea).